Consider the following 862-residue polypeptide: MYSGAGPVLVPPTTTPPLPMPAYTFKPPPRPDFGTSGRTIKLQANVFEMDIPKIEIYHYDIDIKPEKCPRRVNREIVEHMVQHFKAQIFGDRKPVFDGRKNLYTAMPLPIARDKQVELEVTLPGEGKDRIFKVAIKWMACVSLQALHDALSGRLPNVPFETVQALDVVMRHLPSMRYTPVGRSFFTASEGCANPLGGGREVWFGFHQSVRPSLWKMMLNIDVSATAFYKAQPVIEFMCEVLDFKSIEEQQKPLTDSQRVKFTKEIKGLKVEITHCGQMKRKYRVCNVTRRPASHQTFPLQQESGQTVECTVAQYFKDRHKLVLRYPHLPCLQVGQEQKHTYLPLEVCNIVAGQRCIKKLTDNQTSTMIRATARSAPDRQEEISKLMRSASFNTDPFVREFGIMVKDDMTDVTGRVLQPPSILYGGRSKAIATPVQGVWDMRNKQFHTGIEIKVWAIACFAPQRQCTEVHLKTFTEQLRKISRDAGMPIQGQPCFCKYAQGADSVEPMFRHLKNTYTGLQLVVVILPGKTPVYAEVKRVGDTVLGMATQCVQMKNVQRTTPQTLSNLCLKINVKLGGVNNILLPQGRPPVFQQPVIFLGADVTHPPAGDGKKPSIAAVVGSMDAHPNRYCATVRVQQHRQEIIQDLSAMVRELLIQFYKSTRFKPTRIIFYRDGVSEGQFQQVLHHELLAIREACIKLEKDYQPGITFIVVQKRHHTRLFCTDRNERVGKSGNIPAGTTVDTKITHPSEFDFYLCSHAGIQGTSRPSHYHVLWDDNRFSSDELQILTYQLCHTYVRCTRSVSIPAPAYYAHLVAFRARYHLVDKEHDSAEGSHTSGQSNGRDQQALAKAVQVHQDTLRTMYFA.

The PAZ domain occupies Pro-232–Ala-351. 2 interaction with guide RNA regions span residues Tyr-314–His-319 and Gly-527–Lys-569. In terms of domain architecture, Piwi spans Leu-520–Val-821. Residues Phe-590–Pro-593 are interaction with GW182 family members. Asp-600 lines the a divalent metal cation pocket. Positions Leu-653–Lys-663 are interaction with GW182 family members. An a divalent metal cation-binding site is contributed by Asp-672. Interaction with guide RNA stretches follow at residues Lys-712–Arg-713, His-756–Arg-764, and Tyr-793–Arg-815. Position 810 (His-810) interacts with a divalent metal cation. The tract at residues His-825–Lys-847 is disordered. Polar residues predominate over residues Gly-830 to Asp-841.

Belongs to the argonaute family. Ago subfamily. As to quaternary structure, component of the RISC loading complex (RLC), or micro-RNA (miRNA) loading complex (miRLC), which is composed of dicer1, ago2 and tarbp2. Note that the trimeric RLC/miRLC is also referred to as RISC. It depends on Mg(2+) as a cofactor. Mn(2+) is required as a cofactor.

The protein localises to the cytoplasm. Its subcellular location is the P-body. The catalysed reaction is Endonucleolytic cleavage to 5'-phosphomonoester.. Required for RNA-mediated gene silencing (RNAi) by the RNA-induced silencing complex (RISC). The 'minimal RISC' appears to include ago2 bound to a short guide RNA such as a microRNA (miRNA) or short interfering RNA (siRNA). These guide RNAs direct RISC to complementary mRNAs that are targets for RISC-mediated gene silencing. The precise mechanism of gene silencing depends on the degree of complementarity between the miRNA or siRNA and its target. Binding of RISC to a perfectly complementary mRNA generally results in silencing due to endonucleolytic cleavage of the mRNA specifically by ago2. Binding of RISC to a partially complementary mRNA results in silencing through inhibition of translation, and this is independent of endonuclease activity. The inhibition of translational initiation leads to the accumulation of the affected mRNA in cytoplasmic processing bodies (P-bodies), where mRNA degradation may subsequently occur. The protein is Protein argonaute-2 (ago2) of Xenopus laevis (African clawed frog).